Reading from the N-terminus, the 178-residue chain is Endoribonuclease YbeY (178 aa).

Positions 118, 122, and 128 each coordinate Zn(2+).

It belongs to the endoribonuclease YbeY family. The cofactor is Zn(2+).

It localises to the cytoplasm. Its function is as follows. Single strand-specific metallo-endoribonuclease involved in late-stage 70S ribosome quality control and in maturation of the 3' terminus of the 16S rRNA. The protein is Endoribonuclease YbeY of Mycobacterium leprae (strain Br4923).